We begin with the raw amino-acid sequence, 337 residues long: 1-aminocyclopropane-1-carboxylate deaminase (337 aa).

N6-(pyridoxal phosphate)lysine is present on lysine 50. The Nucleophile role is filled by serine 77.

It belongs to the ACC deaminase/D-cysteine desulfhydrase family. Homotrimer. Pyridoxal 5'-phosphate serves as cofactor.

It catalyses the reaction 1-aminocyclopropane-1-carboxylate + H2O = 2-oxobutanoate + NH4(+). In terms of biological role, catalyzes a cyclopropane ring-opening reaction, the irreversible conversion of 1-aminocyclopropane-1-carboxylate (ACC) to ammonia and alpha-ketobutyrate. Allows growth on ACC as a nitrogen source. In Bradyrhizobium diazoefficiens (strain JCM 10833 / BCRC 13528 / IAM 13628 / NBRC 14792 / USDA 110), this protein is 1-aminocyclopropane-1-carboxylate deaminase.